Consider the following 39-residue polypeptide: Large ribosomal subunit protein bL36 (39 aa).

The protein belongs to the bacterial ribosomal protein bL36 family.

In Leuconostoc mesenteroides subsp. mesenteroides (strain ATCC 8293 / DSM 20343 / BCRC 11652 / CCM 1803 / JCM 6124 / NCDO 523 / NBRC 100496 / NCIMB 8023 / NCTC 12954 / NRRL B-1118 / 37Y), this protein is Large ribosomal subunit protein bL36.